A 77-amino-acid chain; its full sequence is Putative neurotoxin 2 (77 aa).

Positions 1–25 (MKAFIVILSIAIVLLLIVSIKETSA) are cleaved as a signal peptide. A propeptide spanning residues 26–46 (KDCKQECVKRYTNGDFTNFFK) is cleaved from the precursor.

It belongs to the scolopendra neurotoxin 3 family. In terms of processing, contains 2 disulfide bonds. Expressed by the venom gland.

It is found in the secreted. This chain is Putative neurotoxin 2, found in Scolopendra mutilans (Chinese red-headed centipede).